The sequence spans 190 residues: MFEKLKISLIEAPIIKKGDYNYFVHPITDGVPLVDPDVLKEAAEGIKKFGNLNVDKIVCVEAMGIHIATALSIITGIPFVVIRKRQYGLEGEVAVHQITGYSHGELYINGLKKGDKIILVDDVVSTGGTMIAVLKAMEKMGIEIVDVFAIVEKGEGKYIVEGETGFEVKSLVKVNVVDGKVQIEGSRDEN.

It belongs to the purine/pyrimidine phosphoribosyltransferase family. Archaeal HPRT subfamily. In terms of assembly, homodimer.

Its subcellular location is the cytoplasm. The catalysed reaction is IMP + diphosphate = hypoxanthine + 5-phospho-alpha-D-ribose 1-diphosphate. It catalyses the reaction GMP + diphosphate = guanine + 5-phospho-alpha-D-ribose 1-diphosphate. It functions in the pathway purine metabolism; IMP biosynthesis via salvage pathway; IMP from hypoxanthine: step 1/1. Its function is as follows. Catalyzes a salvage reaction resulting in the formation of IMP that is energically less costly than de novo synthesis. The protein is Hypoxanthine/guanine phosphoribosyltransferase of Methanobacterium lacus (strain AL-21).